The chain runs to 75 residues: MFTGLPALSYEQQQQAVERIQQLMAEGMSSGQAIGMVAAEIRENHTGGHVAVMFDEDEEDYMGDNNHDEEEPEEE.

Belongs to the UPF0181 family.

This is UPF0181 protein ETA_15280 from Erwinia tasmaniensis (strain DSM 17950 / CFBP 7177 / CIP 109463 / NCPPB 4357 / Et1/99).